A 338-amino-acid chain; its full sequence is Methionine import ATP-binding protein MetN 1 (338 aa).

The region spanning 2 to 241 (IQLENIEKHY…PNEKLTKDFI (240 aa)) is the ABC transporter domain. 38–45 (GYSGAGKS) is a binding site for ATP.

This sequence belongs to the ABC transporter superfamily. Methionine importer (TC 3.A.1.24) family. In terms of assembly, the complex is composed of two ATP-binding proteins (MetN), two transmembrane proteins (MetI) and a solute-binding protein (MetQ).

It is found in the cell membrane. It carries out the reaction L-methionine(out) + ATP + H2O = L-methionine(in) + ADP + phosphate + H(+). The enzyme catalyses D-methionine(out) + ATP + H2O = D-methionine(in) + ADP + phosphate + H(+). Its function is as follows. Part of the ABC transporter complex MetNIQ involved in methionine import. Responsible for energy coupling to the transport system. This is Methionine import ATP-binding protein MetN 1 from Oceanobacillus iheyensis (strain DSM 14371 / CIP 107618 / JCM 11309 / KCTC 3954 / HTE831).